The following is a 423-amino-acid chain: Histidine--tRNA ligase (423 aa).

It belongs to the class-II aminoacyl-tRNA synthetase family. In terms of assembly, homodimer.

The protein localises to the cytoplasm. It catalyses the reaction tRNA(His) + L-histidine + ATP = L-histidyl-tRNA(His) + AMP + diphosphate + H(+). In Shewanella loihica (strain ATCC BAA-1088 / PV-4), this protein is Histidine--tRNA ligase.